A 792-amino-acid chain; its full sequence is MEQIITGDGALVSNLDEKITSSGIADAGVDYHTVAIIGPQSSGKSTILNLLFGTKFATMNEQRGRQQTTQGIHAAKSVNDPILLFDVEGCDSRERGDSDALFERKSALFALALSEVLVINMWESDIGRYQASNIPMLKTVFEVNIQLFLAQNTTKSKILFVIRDSTAVNFEAIKFQLNRDITNIWDEINLPDSFKGKQMEDFFEFLYFPIHHMVIQRDQFDADVNTLRKWFNEPPLKDYLFAEKSTKVVPGEGLSQYIRNLWEVINENKELNIPSQRTMLARFKCDENAAEALSKFNKFVEENLQRDPDQPITIIQDFKPLCDKSVENALKYYHDNSWRYSEAVVKEREAQLKQEISDVLLPYFNSQCKLFCDNTLKRFNEFISSIDQELHVGGTWESDVQGKIDSLNMDLKKNIKDTTVEPFSWNYPDYEVMKVMFNATESMKGKLVKQLEQTIITEQMRSFDEQANDILAKVDNLMWDNLRNLIRKVSTETTQNTNQVLKTNVSGVHARNDIKRDFQTHTISLVRESANYIVLKMKNTFDRTFKYEKNGRPRVWTRRDNINQIYENSRDAGLKVLRHFTYCRLAESDDEVKPNDPLTQVLIPHERASEIEDKFERIIIHAYEEARANIKAQANREQIPGWAWLATFLCSSNYIMKLLANPIFFALAVIIGGIYSILRMLGLQDVAKKTLLDKFNSLLKNLTKDENEQEKEGEENEEPEEDQPLPNNNRKRMKLMEKSVSQEFSQKSIYKSSEYKGSGDSLMIPQTSPLGNNDSPEKPRDSLTRTQSLEFM.

Residues 1 to 638 (MEQIITGDGA…NIKAQANREQ (638 aa)) lie on the Cytoplasmic side of the membrane. Residues 28–245 (GVDYHTVAII…LKDYLFAEKS (218 aa)) enclose the GB1/RHD3-type G domain. Residue 38 to 45 (GPQSSGKS) coordinates GTP. Residues 639-659 (IPGWAWLATFLCSSNYIMKLL) form a helical membrane-spanning segment. Topologically, residues 660–662 (ANP) are lumenal. Residues 663–683 (IFFALAVIIGGIYSILRMLGL) traverse the membrane as a helical segment. The Cytoplasmic portion of the chain corresponds to 684–792 (QDVAKKTLLD…LTRTQSLEFM (109 aa)). Residues 691–718 (LLDKFNSLLKNLTKDENEQEKEGEENEE) adopt a coiled-coil conformation. The disordered stretch occupies residues 703–792 (TKDENEQEKE…LTRTQSLEFM (90 aa)). Acidic residues predominate over residues 707–723 (NEQEKEGEENEEPEEDQ). Polar residues-rich tracts occupy residues 739-751 (SVSQ…SIYK) and 764-774 (IPQTSPLGNND).

Belongs to the TRAFAC class dynamin-like GTPase superfamily. GB1/RHD3 GTPase family. RHD3 subfamily.

The protein resides in the endoplasmic reticulum membrane. Functionally, probable GTP-binding protein that may be involved in cell development. This Trichomonas vaginalis (strain ATCC PRA-98 / G3) protein is Protein SEY1 homolog 2.